A 250-amino-acid polypeptide reads, in one-letter code: DNA repair protein RecO (250 aa).

Belongs to the RecO family.

In terms of biological role, involved in DNA repair and RecF pathway recombination. The protein is DNA repair protein RecO of Staphylococcus aureus (strain MRSA252).